Consider the following 577-residue polypeptide: Glycine--tRNA ligase (577 aa).

Residues Arg-96 and Glu-161 each coordinate substrate. Residues 193-195 (RNE), 203-208 (IRLREF), 319-320 (EI), and 434-437 (GIDR) contribute to the ATP site. 208-212 (FSQAE) is a binding site for substrate. Substrate is bound at residue 430–434 (EPSFG).

This sequence belongs to the class-II aminoacyl-tRNA synthetase family.

It localises to the cytoplasm. The enzyme catalyses tRNA(Gly) + glycine + ATP = glycyl-tRNA(Gly) + AMP + diphosphate. In terms of biological role, catalyzes the attachment of glycine to tRNA(Gly). This is Glycine--tRNA ligase from Methanothrix thermoacetophila (strain DSM 6194 / JCM 14653 / NBRC 101360 / PT) (Methanosaeta thermophila).